Here is a 205-residue protein sequence, read N- to C-terminus: Glycerol-3-phosphate acyltransferase (205 aa).

6 helical membrane-spanning segments follow: residues 7-27, 54-74, 80-100, 116-136, 141-161, and 163-183; these read MTAL…VWVC, VVPA…VLWV, LPIW…SYPL, VLLM…ALLA, TAAV…YWLA, and EATL…AWNI.

Belongs to the PlsY family. As to quaternary structure, probably interacts with PlsX.

Its subcellular location is the cell inner membrane. The catalysed reaction is an acyl phosphate + sn-glycerol 3-phosphate = a 1-acyl-sn-glycero-3-phosphate + phosphate. It participates in lipid metabolism; phospholipid metabolism. Functionally, catalyzes the transfer of an acyl group from acyl-phosphate (acyl-PO(4)) to glycerol-3-phosphate (G3P) to form lysophosphatidic acid (LPA). This enzyme utilizes acyl-phosphate as fatty acyl donor, but not acyl-CoA or acyl-ACP. The sequence is that of Glycerol-3-phosphate acyltransferase from Chromohalobacter salexigens (strain ATCC BAA-138 / DSM 3043 / CIP 106854 / NCIMB 13768 / 1H11).